The primary structure comprises 632 residues: MSDCCSAPGISWEAGVGRPAVPGLELQIRRGAMSEETVSESQFSLKTAALRVFDLPLTWYYSLSQIKFSPVAKKLFVVTAVSAISVIFLAHHFKRKRGKKKGKILPWEPEHLILEYTKRAASDKGSSCSSSRQNLTLSLSSTKDKGSQVCNYANGGLFSKYSGSAQSLASVQSVNSCHSCACGNSNSWDKADEDDIKLVNIPVTTPENLYLMGMELFEEALRRWEQALTFRNRQAEDEACGSIKLGAGDAIAEENVDDIISTEFIHKLEALLQRAYRLQEEFEATLGASDPNSLADDIDKDTDITMKGNVEDFGLRDTLSIASTDSFASAAELAEHREVRHTYSLESLCHCPFYEEAMHLVEEGKIYSRVLRTEMLECLGDSDFLAKLHCIRQAFQVILSESANRIFLAESGRKILSALIVKARKNPKKFEDVFDEMIYFLEQTDHWGSTEMELAARGVKNLNFYDVVLDFILMDSFEDLENPPTSIQNVVNNRWLNSSFKETAVASSCWSVLKQKRQQMKIPDGFFAHFYAICEHISPVLAWGFLGPRNSLYDLCCFFKNQVLLFLKDIFDFEKVRYSSTETLAEDLMQLLIRRTELLMAYLEADALRHTSSCLSSHGHVMSTGLLEAKVQ.

Residues 70–90 (PVAKKLFVVTAVSAISVIFLA) form a helical membrane-spanning segment. A phosphoserine mark is found at Ser289 and Ser293.

This sequence belongs to the mitoguardin family. In terms of assembly, homodimer and heterodimer; forms heterodimers with MIGA2. Interacts with PLD6/MitoPLD.

Its subcellular location is the mitochondrion outer membrane. Its function is as follows. Regulator of mitochondrial fusion: acts by forming homo- and heterodimers at the mitochondrial outer membrane and facilitating the formation of PLD6/MitoPLD dimers. May act by regulating phospholipid metabolism via PLD6/MitoPLD. The chain is Mitoguardin 1 from Homo sapiens (Human).